The following is a 380-amino-acid chain: Crotonobetainyl-CoA reductase (380 aa).

This sequence belongs to the acyl-CoA dehydrogenase family. As to quaternary structure, homotetramer. FAD serves as cofactor.

It localises to the cytoplasm. The catalysed reaction is 4-(trimethylamino)butanoyl-CoA + oxidized [electron-transfer flavoprotein] + H(+) = crotonobetainyl-CoA + reduced [electron-transfer flavoprotein]. It participates in amine and polyamine metabolism; carnitine metabolism. In terms of biological role, catalyzes the reduction of crotonobetainyl-CoA to gamma-butyrobetainyl-CoA. This Shigella flexneri serotype 5b (strain 8401) protein is Crotonobetainyl-CoA reductase.